The primary structure comprises 975 residues: Protein spalten (975 aa).

Disordered regions lie at residues 1-31 (MKKM…QLAQ) and 64-99 (NLAQ…SNNN). The segment covering 8 to 17 (NKKEKKEEQS) has biased composition (basic and acidic residues). Positions 21–70 (SSLAQQHQLAQQQYQLQQQQLQLQYQQHQQQLQLAQQQKQNEQNLAQLST) form a coiled coil. The G-alpha domain maps to 114 to 458 (FCGTIMILGH…DAEKRGFTTP (345 aa)). The tract at residues 117-130 (TIMILGHTESGKTT) is G1 motif. GTP is bound by residues 122–129 (GHTESGKT), 261–267 (ISAYDQK), 286–290 (GCSGK), and 373–376 (NTSD). The segment at 259 to 267 (DIISAYDQK) is G2 motif. Residues 282 to 291 (VDLFGCSGKQ) form a G3 motif region. A G4 motif region spans residues 369 to 376 (YLIFNTSD). The G5 motif stretch occupies residues 427–432 (VNLLDK). Disordered regions lie at residues 455–520 (FTTP…GSST) and 541–700 (DNDS…VGSK). 3 stretches are compositionally biased toward low complexity: residues 460-478 (NQSN…SRNS), 500-515 (LKNV…NTTT), and 544-587 (SSYS…NNAT). The span at 595 to 688 (PPKEPKPVKP…DGAAESKKNG (94 aa)) shows a compositional bias: basic and acidic residues. One can recognise a PPM-type phosphatase domain in the interval 704–972 (ESGFGSLQGR…DNITVLVVIL (269 aa)). Mn(2+) is bound by residues aspartate 749, glycine 750, aspartate 920, and aspartate 963.

In the N-terminal section; belongs to the G-alpha family. The protein in the C-terminal section; belongs to the PP2C family. G proteins are composed of 3 units; alpha, beta and gamma. The alpha chain contains the guanine nucleotide binding site. The cofactor is Mg(2+). Mn(2+) is required as a cofactor.

The protein localises to the cytoplasm. Its subcellular location is the cytosol. It is found in the cell membrane. The enzyme catalyses O-phospho-L-seryl-[protein] + H2O = L-seryl-[protein] + phosphate. It carries out the reaction O-phospho-L-threonyl-[protein] + H2O = L-threonyl-[protein] + phosphate. With respect to regulation, inhibited by 50 mM NaF (sodium fluoride). Functionally, involved in cell-type differentiation and morphogenesis. Dephosphorylates casein; in vitro. May also be involved as modulators or transducers in various transmembrane signaling systems. The protein is Protein spalten (spnA) of Dictyostelium discoideum (Social amoeba).